The primary structure comprises 85 residues: Large ribosomal subunit protein bL27 (85 aa).

The tract at residues 1–22 (MAHKKAGGSTNNGRDSESKRLG) is disordered.

It belongs to the bacterial ribosomal protein bL27 family.

This chain is Large ribosomal subunit protein bL27, found in Vibrio atlanticus (strain LGP32) (Vibrio splendidus (strain Mel32)).